A 428-amino-acid polypeptide reads, in one-letter code: Chaperone SurA (428 aa).

Residues 1-19 form the signal peptide; it reads MNIWKTLLLGMLVTGSAVS. 2 consecutive PpiC domains span residues 170 to 268 and 277 to 377; these read SVEY…KIED and VTEV…EVLD.

The protein localises to the periplasm. It carries out the reaction [protein]-peptidylproline (omega=180) = [protein]-peptidylproline (omega=0). Chaperone involved in the correct folding and assembly of outer membrane proteins. Recognizes specific patterns of aromatic residues and the orientation of their side chains, which are found more frequently in integral outer membrane proteins. May act in both early periplasmic and late outer membrane-associated steps of protein maturation. The polypeptide is Chaperone SurA (Vibrio vulnificus (strain YJ016)).